Here is a 188-residue protein sequence, read N- to C-terminus: UPF0398 protein BBR47_29830 (188 aa).

This sequence belongs to the UPF0398 family.

This Brevibacillus brevis (strain 47 / JCM 6285 / NBRC 100599) protein is UPF0398 protein BBR47_29830.